Consider the following 154-residue polypeptide: 3-hydroxyacyl-[acyl-carrier-protein] dehydratase FabZ (154 aa).

Residue His58 is part of the active site.

The protein belongs to the thioester dehydratase family. FabZ subfamily.

The protein resides in the cytoplasm. The enzyme catalyses a (3R)-hydroxyacyl-[ACP] = a (2E)-enoyl-[ACP] + H2O. Its function is as follows. Involved in unsaturated fatty acids biosynthesis. Catalyzes the dehydration of short chain beta-hydroxyacyl-ACPs and long chain saturated and unsaturated beta-hydroxyacyl-ACPs. The polypeptide is 3-hydroxyacyl-[acyl-carrier-protein] dehydratase FabZ (Protochlamydia amoebophila (strain UWE25)).